Consider the following 116-residue polypeptide: Large ribosomal subunit protein bL20 (116 aa).

The protein belongs to the bacterial ribosomal protein bL20 family.

Functionally, binds directly to 23S ribosomal RNA and is necessary for the in vitro assembly process of the 50S ribosomal subunit. It is not involved in the protein synthesizing functions of that subunit. The chain is Large ribosomal subunit protein bL20 from Mycoplasmopsis agalactiae (strain NCTC 10123 / CIP 59.7 / PG2) (Mycoplasma agalactiae).